Reading from the N-terminus, the 177-residue chain is Nucleoside triphosphate/diphosphate phosphatase (177 aa).

Catalysis depends on R23, which acts as the Proton donor. 6 residues coordinate Mg(2+): N87, D103, D105, D107, D120, and E123.

Belongs to the Ntdp family. The cofactor is Mg(2+).

It catalyses the reaction a ribonucleoside 5'-triphosphate + H2O = a ribonucleoside 5'-diphosphate + phosphate + H(+). It carries out the reaction a ribonucleoside 5'-diphosphate + H2O = a ribonucleoside 5'-phosphate + phosphate + H(+). Has nucleoside phosphatase activity towards nucleoside triphosphates and nucleoside diphosphates. The sequence is that of Nucleoside triphosphate/diphosphate phosphatase from Streptococcus pneumoniae serotype 2 (strain D39 / NCTC 7466).